A 180-amino-acid polypeptide reads, in one-letter code: GTP cyclohydrolase 1 (180 aa).

Cysteine 71, histidine 74, and cysteine 142 together coordinate Zn(2+).

The protein belongs to the GTP cyclohydrolase I family. In terms of assembly, toroid-shaped homodecamer, composed of two pentamers of five dimers.

It catalyses the reaction GTP + H2O = 7,8-dihydroneopterin 3'-triphosphate + formate + H(+). It participates in cofactor biosynthesis; 7,8-dihydroneopterin triphosphate biosynthesis; 7,8-dihydroneopterin triphosphate from GTP: step 1/1. The protein is GTP cyclohydrolase 1 (folE) of Helicobacter pylori (strain ATCC 700392 / 26695) (Campylobacter pylori).